Here is a 469-residue protein sequence, read N- to C-terminus: 6-phosphofructo-2-kinase/fructose-2,6-bisphosphatase 4 (469 aa).

The segment at 1 to 249 (MASPRELTQN…YYLMNIHVTP (249 aa)) is 6-phosphofructo-2-kinase. 46-54 (GLPARGKTY) is an ATP binding site. Residues arginine 79 and arginine 103 each coordinate beta-D-fructose 6-phosphate. Aspartate 129 is an active-site residue. Beta-D-fructose 6-phosphate is bound by residues threonine 131 and arginine 137. Cysteine 159 is a catalytic residue. Position 168–173 (168–173 (NIVQVK)) interacts with ATP. 3 residues coordinate beta-D-fructose 6-phosphate: lysine 173, arginine 194, and tyrosine 198. A fructose-2,6-bisphosphatase region spans residues 250–469 (RSIYLCRHGE…EALVTVPAHQ (220 aa)). A beta-D-fructose 2,6-bisphosphate-binding site is contributed by arginine 256. Histidine 257 acts as the Tele-phosphohistidine intermediate in catalysis. Beta-D-fructose 2,6-bisphosphate-binding residues include asparagine 263, glycine 269, and arginine 306. The Proton donor/acceptor role is filled by glutamate 326. The beta-D-fructose 2,6-bisphosphate site is built by tyrosine 337, arginine 351, lysine 355, tyrosine 366, glutamine 392, and arginine 396. 348–351 (FALR) contacts ATP. ATP-binding positions include 392 to 396 (QAVMR) and tyrosine 428. Threonine 444 carries the post-translational modification Phosphothreonine; by PKC.

In the C-terminal section; belongs to the phosphoglycerate mutase family. In terms of assembly, homodimer.

The enzyme catalyses beta-D-fructose 2,6-bisphosphate + H2O = beta-D-fructose 6-phosphate + phosphate. The catalysed reaction is beta-D-fructose 6-phosphate + ATP = beta-D-fructose 2,6-bisphosphate + ADP + H(+). Its activity is regulated as follows. The most important regulatory mechanism of these opposing activities is by phosphorylation and dephosphorylation of the enzyme. Functionally, synthesis and degradation of fructose 2,6-bisphosphate. The polypeptide is 6-phosphofructo-2-kinase/fructose-2,6-bisphosphatase 4 (PFKFB4) (Macaca fascicularis (Crab-eating macaque)).